The chain runs to 368 residues: Probable dual-specificity RNA methyltransferase RlmN (368 aa).

Catalysis depends on glutamate 100, which acts as the Proton acceptor. Residues 106-344 (QHYGLSVCVT…CVVRQEHGTD (239 aa)) enclose the Radical SAM core domain. A disulfide bond links cysteine 113 and cysteine 349. [4Fe-4S] cluster-binding residues include cysteine 120, cysteine 124, and cysteine 127. Residues 172 to 173 (GE), serine 204, 227 to 229 (SLH), and asparagine 305 contribute to the S-adenosyl-L-methionine site. Cysteine 349 functions as the S-methylcysteine intermediate in the catalytic mechanism.

This sequence belongs to the radical SAM superfamily. RlmN family. It depends on [4Fe-4S] cluster as a cofactor.

It localises to the cytoplasm. It carries out the reaction adenosine(2503) in 23S rRNA + 2 reduced [2Fe-2S]-[ferredoxin] + 2 S-adenosyl-L-methionine = 2-methyladenosine(2503) in 23S rRNA + 5'-deoxyadenosine + L-methionine + 2 oxidized [2Fe-2S]-[ferredoxin] + S-adenosyl-L-homocysteine. The enzyme catalyses adenosine(37) in tRNA + 2 reduced [2Fe-2S]-[ferredoxin] + 2 S-adenosyl-L-methionine = 2-methyladenosine(37) in tRNA + 5'-deoxyadenosine + L-methionine + 2 oxidized [2Fe-2S]-[ferredoxin] + S-adenosyl-L-homocysteine. Functionally, specifically methylates position 2 of adenine 2503 in 23S rRNA and position 2 of adenine 37 in tRNAs. The chain is Probable dual-specificity RNA methyltransferase RlmN from Streptococcus agalactiae serotype Ia (strain ATCC 27591 / A909 / CDC SS700).